We begin with the raw amino-acid sequence, 336 residues long: Malate dehydrogenase, cytoplasmic (336 aa).

NAD(+) contacts are provided by residues 11–17 (GAAGQIG) and D42. Substrate is bound by residues R92 and R98. NAD(+) is bound by residues N105, Q112, and 129–131 (VGN). Substrate-binding residues include N131 and R163. The Proton acceptor role is filled by H188.

This sequence belongs to the LDH/MDH superfamily. MDH type 2 family. Homodimer.

The protein resides in the cytoplasm. The catalysed reaction is (S)-malate + NAD(+) = oxaloacetate + NADH + H(+). Its function is as follows. Catalyzes the reversible conversion of (S)-malate to oxaloacetate in the cytoplasm where oxaloacetate is used for gluconeogenesis. This chain is Malate dehydrogenase, cytoplasmic, found in Caenorhabditis elegans.